Reading from the N-terminus, the 671-residue chain is cGMP-dependent protein kinase 1 (671 aa).

S2 bears the N-acetylserine mark. The stretch at 2–59 (SELEEDFAKILMLKEERIKELEKRLSEKEEEIQELKRKLHKCQSVLPVPSTHIGPRTT) forms a coiled coil. A required for dimerization region spans residues 2–102 (SELEEDFAKI…LIKEAILDND (101 aa)). Residues 9–44 (AKILMLKEERIKELEKRLSEKEEEIQELKRKLHKCQ) are leucine-zipper. The tract at residues 50–75 (PSTHIGPRTTRAQGISAEPQTYRSFH) is autoinhibitory domain. Residue T59 is modified to Phosphothreonine; by autocatalysis. The cGMP-binding, high affinity stretch occupies residues 103–220 (FMKNLELSQI…EYMEFLKSVP (118 aa)). 3',5'-cyclic GMP contacts are provided by residues 167–170 (GELA), 177–178 (RT), R282, 291–294 (GEKA), 301–302 (RT), and Y336. The interval 221–341 (TFQSLPDEIL…SNKAYEDAEA (121 aa)) is cGMP-binding, low affinity. The 260-residue stretch at 360 to 619 (FNIIDTLGVG…VKDIQKHKWF (260 aa)) folds into the Protein kinase domain. Residues 366-374 (LGVGGFGRV) and K390 each bind ATP. D484 (proton acceptor) is an active-site residue. T515 is subject to Phosphothreonine. Residues 620 to 671 (EGFNWEGLRKGTLTPPIIPSVASPTDTSNFDSFPEDSDEPPPDDNSGWDIDF) form the AGC-kinase C-terminal domain. The tract at residues 635–671 (PIIPSVASPTDTSNFDSFPEDSDEPPPDDNSGWDIDF) is disordered. Positions 652 to 661 (FPEDSDEPPP) are enriched in acidic residues.

It belongs to the protein kinase superfamily. AGC Ser/Thr protein kinase family. cGMP subfamily. In terms of assembly, isoform alpha: parallel homodimer or heterodimer and also heterotetramer. Interacts directly with PPP1R12A. Non-covalent dimer of dimer of PRKG1-PRKG1 and PPP1R12A-PPP1R12A. This interaction targets PRKG1 to stress fibers to mediate smooth muscle cell relaxation and vasodilation in responses to rises in cGMP. Isoform beta: antiparallel homodimer. Part of cGMP kinase signaling complex at least composed of ACTA2/alpha-actin, CNN1/calponin H1, PLN/phospholamban, PRKG1 and ITPR1. Interacts with IRAG1. Forms a stable complex with ITPR1, IRAG1, and isoform beta of PRKG1. Interacts with TRPC7 (via ankyrin repeat domain). Isoform alpha interacts with RGS2. Interacts with GTF2I. In terms of processing, autophosphorylation increases kinase activity. Post-translationally, 65 kDa monomer is produced by proteolytic cleavage. In terms of tissue distribution, detected in cerebellum, hippocampus, dorsomedial hypothalamus, medulla, subcommissural organ, cerebral cortex, amygdala, habenulae, various hypothalamic regions, olfactory bulb, pituitary gland, and retina. Isoform alpha is prominent in the cerebellum and medulla, whereas isoform Beta is predominant in the cortex, hippocampus, hypothalamus, and olfactory bulb.

It is found in the cytoplasm. The enzyme catalyses L-seryl-[protein] + ATP = O-phospho-L-seryl-[protein] + ADP + H(+). It catalyses the reaction L-threonyl-[protein] + ATP = O-phospho-L-threonyl-[protein] + ADP + H(+). In the absence of cGMP, PRKG1 activity is suppressed by autoinhibitory contacts. Serine/threonine protein kinase that acts as a key mediator of the nitric oxide (NO)/cGMP signaling pathway. GMP binding activates PRKG1, which phosphorylates serines and threonines on many cellular proteins. Numerous protein targets for PRKG1 phosphorylation are implicated in modulating cellular calcium, but the contribution of each of these targets may vary substantially among cell types. Proteins that are phosphorylated by PRKG1 regulate platelet activation and adhesion, smooth muscle contraction, cardiac function, gene expression, feedback of the NO-signaling pathway, and other processes involved in several aspects of the CNS like axon guidance, hippocampal and cerebellar learning, circadian rhythm and nociception. Smooth muscle relaxation is mediated through lowering of intracellular free calcium, by desensitization of contractile proteins to calcium, and by decrease in the contractile state of smooth muscle or in platelet activation. Regulates intracellular calcium levels via several pathways: phosphorylates IRAG1 and inhibits IP3-induced Ca(2+) release from intracellular stores, phosphorylation of KCNMA1 (BKCa) channels decreases intracellular Ca(2+) levels, which leads to increased opening of this channel. PRKG1 phosphorylates the canonical transient receptor potential channel (TRPC) family which inactivates the associated inward calcium current. Another mode of action of NO/cGMP/PKGI signaling involves PKGI-mediated inactivation of the Ras homolog gene family member A (RhoA). Phosphorylation of RHOA by PRKG1 blocks the action of this protein in myriad processes: regulation of RHOA translocation; decreasing contraction; controlling vesicle trafficking, reduction of myosin light chain phosphorylation resulting in vasorelaxation. Activation of PRKG1 by NO signaling also alters gene expression in a number of tissues. In smooth muscle cells, increased cGMP and PRKG1 activity influence expression of smooth muscle-specific contractile proteins, levels of proteins in the NO/cGMP signaling pathway, down-regulation of the matrix proteins osteopontin and thrombospondin-1 to limit smooth muscle cell migration and phenotype. Regulates vasodilator-stimulated phosphoprotein (VASP) functions in platelets and smooth muscle. This chain is cGMP-dependent protein kinase 1 (Prkg1), found in Mus musculus (Mouse).